The chain runs to 585 residues: MAEAGTGFLEQLKSCIVWSWTYLWTVWFFFVLFLVYILRVPLKINDNLSTVSMFLNTLTPKFYVALTGTSSLISGLILIFEWWYFRKYGTSFIEQVSVSHLRPLLGGVDNNSSNSSNSSNGDSDSNRQSVSECKVWRNPLNLFRGAEYNRYTWVTGREPLTYYDMNLSAQDHQTFFTCDSDHLRPADAIMQKAWRERNPQARISAAHEALEINEIRSRVEVPLIASSTIWEIKLLPKCATAYILLAEEEATTIAEAEKLFKQALKAGDGCYRRSQQLQHHGSQYEAQHRRDTNVLVYIKRRLAMCARRLGRTREAVKMMRDLMKEFPLLSMFNIHENLLEALLELQAYADVQAVLAKYDDISLPKSATICYTAALLKARAVSDKFSPEAASRRGLSTAEMNAVEAIHRAVEFNPHVPKYLLEMKSLILPPEHILKRGDSEAIAYAFFHLAHWKRVEGALNLLHCTWEGTFRMIPYPLEKGHLFYPYPICTETADRELLPSFHEVSVYPKKELPFFILFTAGLCSFTAMLALLTHQFPELMGVFAKAMIDIFCSAEFRDWNCKSIFIRVEDELEIPPAPQSQHFQN.

Residues 15-35 traverse the membrane as a helical segment; the sequence is CIVWSWTYLWTVWFFFVLFLV. Residue asparagine 47 is glycosylated (N-linked (GlcNAc...) asparagine). Residues 62–82 form a helical membrane-spanning segment; the sequence is FYVALTGTSSLISGLILIFEW. Serine 386 is modified (phosphoserine). Residues 512 to 532 traverse the membrane as a helical segment; the sequence is LPFFILFTAGLCSFTAMLALL.

This sequence belongs to the ST7 family.

The protein resides in the membrane. The chain is Suppressor of tumorigenicity 7 protein (ST7) from Dasypus novemcinctus (Nine-banded armadillo).